We begin with the raw amino-acid sequence, 375 residues long: Protein MGF 360-4L (375 aa).

It belongs to the asfivirus MGF 360 family.

In terms of biological role, plays a role in virus cell tropism, and may be required for efficient virus replication in macrophages. This chain is Protein MGF 360-4L, found in Ornithodoros (relapsing fever ticks).